Here is a 94-residue protein sequence, read N- to C-terminus: Integration host factor subunit beta (94 aa).

Belongs to the bacterial histone-like protein family. Heterodimer of an alpha and a beta chain.

Functionally, this protein is one of the two subunits of integration host factor, a specific DNA-binding protein that functions in genetic recombination as well as in transcriptional and translational control. In Escherichia fergusonii (strain ATCC 35469 / DSM 13698 / CCUG 18766 / IAM 14443 / JCM 21226 / LMG 7866 / NBRC 102419 / NCTC 12128 / CDC 0568-73), this protein is Integration host factor subunit beta.